Here is a 376-residue protein sequence, read N- to C-terminus: Queuine tRNA-ribosyltransferase (376 aa).

D90 (proton acceptor) is an active-site residue. Substrate-binding positions include 90 to 94, D144, Q193, and G220; that span reads DSGGF. The interval 251–257 is RNA binding; it reads GVGTPED. The Nucleophile role is filled by D270. Residues 275-279 are RNA binding; important for wobble base 34 recognition; that stretch reads TRNAR. 4 residues coordinate Zn(2+): C308, C310, C313, and H339.

Belongs to the queuine tRNA-ribosyltransferase family. Homodimer. Within each dimer, one monomer is responsible for RNA recognition and catalysis, while the other monomer binds to the replacement base PreQ1. The cofactor is Zn(2+).

It carries out the reaction 7-aminomethyl-7-carbaguanine + guanosine(34) in tRNA = 7-aminomethyl-7-carbaguanosine(34) in tRNA + guanine. It functions in the pathway tRNA modification; tRNA-queuosine biosynthesis. Its function is as follows. Catalyzes the base-exchange of a guanine (G) residue with the queuine precursor 7-aminomethyl-7-deazaguanine (PreQ1) at position 34 (anticodon wobble position) in tRNAs with GU(N) anticodons (tRNA-Asp, -Asn, -His and -Tyr). Catalysis occurs through a double-displacement mechanism. The nucleophile active site attacks the C1' of nucleotide 34 to detach the guanine base from the RNA, forming a covalent enzyme-RNA intermediate. The proton acceptor active site deprotonates the incoming PreQ1, allowing a nucleophilic attack on the C1' of the ribose to form the product. After dissociation, two additional enzymatic reactions on the tRNA convert PreQ1 to queuine (Q), resulting in the hypermodified nucleoside queuosine (7-(((4,5-cis-dihydroxy-2-cyclopenten-1-yl)amino)methyl)-7-deazaguanosine). The protein is Queuine tRNA-ribosyltransferase of Cupriavidus necator (strain ATCC 17699 / DSM 428 / KCTC 22496 / NCIMB 10442 / H16 / Stanier 337) (Ralstonia eutropha).